Here is a 118-residue protein sequence, read N- to C-terminus: uncharacterized protein (118 aa).

Residues Ile21 to Asn38 form a helical membrane-spanning segment.

It localises to the membrane. This is an uncharacterized protein from Dictyostelium discoideum (Social amoeba).